An 81-amino-acid chain; its full sequence is Short neurotoxin 2 (81 aa).

Residues 1–21 (MKTLLLTLVVVTIVCLDLGYT) form the signal peptide. Intrachain disulfides connect C24-C43, C38-C60, C62-C73, and C74-C79.

It belongs to the three-finger toxin family. Short-chain subfamily. Type I alpha-neurotoxin sub-subfamily. In terms of tissue distribution, expressed by the venom gland.

The protein localises to the secreted. Its function is as follows. Binds to muscle nicotinic acetylcholine receptor (nAChR) and inhibit acetylcholine from binding to the receptor, thereby impairing neuromuscular transmission. The chain is Short neurotoxin 2 from Drysdalia coronoides (White-lipped snake).